Here is a 181-residue protein sequence, read N- to C-terminus: Large ribosomal subunit protein uL6 (181 aa).

Belongs to the universal ribosomal protein uL6 family. In terms of assembly, part of the 50S ribosomal subunit.

In terms of biological role, this protein binds to the 23S rRNA, and is important in its secondary structure. It is located near the subunit interface in the base of the L7/L12 stalk, and near the tRNA binding site of the peptidyltransferase center. In Ruthia magnifica subsp. Calyptogena magnifica, this protein is Large ribosomal subunit protein uL6.